Reading from the N-terminus, the 2278-residue chain is Genome polyprotein (2278 aa).

An SF3 helicase domain is found at 454 to 609 (LESTANSIRS…EDWKKKNPGK (156 aa)). ATP is bound at residue 481-488 (GPPGIGKT). The interval 939–958 (EEAKGKTKHGRGAKHARRGG) is disordered. The span at 944–956 (KTKHGRGAKHARR) shows a compositional bias: basic residues. O-(5'-phospho-RNA)-tyrosine is present on tyrosine 966. Residues 1056–1204 (APTPIVTFTS…TKLAQRVTKT (149 aa)) form the Peptidase C24 domain. Active-site for 3CLpro activity residues include histidine 1086, glutamate 1107, and cysteine 1171. One can recognise a RdRp catalytic domain in the interval 1443–1568 (GVLYCLDYSK…SVCPATASIF (126 aa)).

As to quaternary structure, homodimer. Homomultimer. Post-translationally, specific enzymatic cleavages in vivo yield mature proteins. Pro-Pol is first autocatalytically cleaved, then processes the whole polyprotein. In terms of processing, VPg is uridylylated by the polymerase and is covalently attached to the 5'-end of the polyadenylated genomic and subgenomic RNAs. This uridylylated form acts as a nucleotide-peptide primer for the polymerase.

The protein localises to the virion. The protein resides in the host cytoplasm. The enzyme catalyses a ribonucleoside 5'-triphosphate + H2O = a ribonucleoside 5'-diphosphate + phosphate + H(+). It catalyses the reaction RNA(n) + a ribonucleoside 5'-triphosphate = RNA(n+1) + diphosphate. It carries out the reaction Endopeptidase with a preference for cleavage when the P1 position is occupied by Glu-|-Xaa and the P1' position is occupied by Gly-|-Yaa.. Together with NTPase and NS4, initiates the formation of the replication complex. Induces the proliferation of the host smooth ER membranes forming long tubular structures. These remodeled membranes probably form the viral factories that contain the replication complex. Functionally, displays NTPase activity, but no helicase activity. Induces the formation of convoluted membranes derived from the host ER. These remodeled membranes probably form the viral factories that contain the replication complex. Together with NS2 and NS4, initiates the formation of the replication complex. Its function is as follows. Probable key protein responsible for the formation of membrane alterations by the virus. Induces the formation of convoluted membranes derived from the host ER. These remodeled membranes probably form the viral factories that contain the replication complex. Together with NS2 and NTPase, initiates the formation of the replication complex. In terms of biological role, viral genome-linked protein is covalently linked to the 5'-end of the positive-strand, negative-strand genomic RNAs and subgenomic RNA. Acts as a genome-linked replication primer. May recruit ribosome to viral RNA thereby promoting viral proteins translation. Interacts with host translation initiation complex to allow the translation of viral proteins. Protease-polymerase p76 processes the polyprotein: Pro-Pol is first released by autocleavage, then all other proteins are cleaved. Cleaves host translation initiation factor eIF4G1, eIF4G2 and PABP1 thereby inducing a shutdown of host protein synthesis. This shutdown may not prevent viral mRNA from being translated since viral Vpg replaces the cap. It is also an RNA-directed RNA polymerase which replicates genomic and antigenomic viral RNA by recognizing specific signals. Also transcribes a subgenomic mRNA by initiating RNA synthesis internally on antigenomic RNA. This sgRNA codes for structural proteins. Catalyzes the covalent attachment VPg with viral RNAs. Functionally, capsid protein self assembles to form an icosahedral capsid with a T=3 symmetry, about 38 nm in diameter, and consisting of 180 capsid proteins. The capsid encapsulate the genomic RNA and VP2 proteins. Attaches virion to target cells, inducing endocytosis of the viral particle. Acidification of the endosome induces conformational change of capsid protein thereby injecting virus genomic RNA into host cytoplasm. This chain is Genome polyprotein, found in Homo sapiens (Human).